The sequence spans 400 residues: Calsequestrin-2 (400 aa).

The N-terminal stretch at 1–19 (MKRTHLFIVGVYVLSSCRA) is a signal peptide. Tyrosine 282 carries the phosphotyrosine modification. The N-linked (GlcNAc...) asparagine glycan is linked to asparagine 335. The interval 365 to 400 (VLSGKINTEDDDDEDDDDDNSDEEDNDDSDDDDDDE) is disordered. Over residues 373 to 400 (EDDDDEDDDDDNSDEEDNDDSDDDDDDE) the composition is skewed to acidic residues.

The protein belongs to the calsequestrin family. In terms of assembly, monomer, homodimer and homooligomer. Mostly monomeric in the absence of calcium. Forms higher oligomers in a calcium-dependent manner. Dimers associate to form tetramers, that then form linear homomer chains. Interacts with ASPH and TRDN. Post-translationally, phosphorylation in the C-terminus, probably by CK2, moderately increases calcium buffering capacity. In terms of processing, N-glycosylated.

It localises to the sarcoplasmic reticulum lumen. Its function is as follows. Calsequestrin is a high-capacity, moderate affinity, calcium-binding protein and thus acts as an internal calcium store in muscle. Calcium ions are bound by clusters of acidic residues at the protein surface, especially at the interface between subunits. Can bind around 60 Ca(2+) ions. Regulates the release of lumenal Ca(2+) via the calcium release channel RYR2; this plays an important role in triggering muscle contraction. Plays a role in excitation-contraction coupling in the heart and in regulating the rate of heart beats. This is Calsequestrin-2 (CASQ2) from Pongo abelii (Sumatran orangutan).